Here is a 497-residue protein sequence, read N- to C-terminus: Arabinose import ATP-binding protein AraG (497 aa).

ABC transporter domains are found at residues 6–242 (LRFD…MVGR) and 250–497 (FRPR…ALPA). Residue 38–45 (GENGAGKS) participates in ATP binding.

This sequence belongs to the ABC transporter superfamily. Arabinose importer (TC 3.A.1.2.2) family. The complex is composed of two ATP-binding proteins (AraG), two transmembrane proteins (AraH) and a solute-binding protein (AraF).

It is found in the cell inner membrane. It catalyses the reaction L-arabinose(out) + ATP + H2O = L-arabinose(in) + ADP + phosphate + H(+). Part of the ABC transporter complex AraFGH involved in arabinose import. Responsible for energy coupling to the transport system. The sequence is that of Arabinose import ATP-binding protein AraG from Chromohalobacter salexigens (strain ATCC BAA-138 / DSM 3043 / CIP 106854 / NCIMB 13768 / 1H11).